A 159-amino-acid chain; its full sequence is MISLIAALAVDRVIGMENAMPWNLPADLAWFKRNTLNKPVIMGRHTWESIGRPLPGRKNIILSSQPGTDDRVTWVKSVDEAIAACGDVPEIMVIGGGRVYEQFLPKAQKLYLTHIDAEVEGDTHFPDYEPDDWESVFSEFHDADAQNSHSYCFEILERR.

A DHFR domain is found at 1–158 (MISLIAALAV…HSYCFEILER (158 aa)). Ile-5 is a substrate binding site. Residues Ala-7 and 13-19 (VIGMENA) each bind NADP(+). Asp-27 lines the substrate pocket. Residue 45-46 (HT) participates in NADP(+) binding. Substrate is bound by residues Arg-52 and Arg-57. Residues 63 to 64 (SS), Lys-76, and 95 to 102 (GGGRVYEQ) contribute to the NADP(+) site. Thr-113 contacts substrate.

The protein belongs to the dihydrofolate reductase family.

The enzyme catalyses (6S)-5,6,7,8-tetrahydrofolate + NADP(+) = 7,8-dihydrofolate + NADPH + H(+). It participates in cofactor biosynthesis; tetrahydrofolate biosynthesis; 5,6,7,8-tetrahydrofolate from 7,8-dihydrofolate: step 1/1. Functionally, key enzyme in folate metabolism. Catalyzes an essential reaction for de novo glycine and purine synthesis, and for DNA precursor synthesis. This is Dihydrofolate reductase (folA) from Escherichia coli O6:H1 (strain CFT073 / ATCC 700928 / UPEC).